The following is a 2351-amino-acid chain: Coagulation factor VIII (2351 aa).

Positions 1 to 19 (MQIELSTCFFLCLLRFCFS) are cleaved as a signal peptide. 2 Plastocyanin-like domains span residues 20–198 (ATRR…LLVC) and 206–348 (EKTQ…VDSC). In terms of domain architecture, F5/8 type A 1 spans 20 to 348 (ATRRYYLGAV…MEAYVKVDSC (329 aa)). The N-linked (GlcNAc...) asparagine glycan is linked to N60. C172 and C198 are joined by a disulfide. N258 carries N-linked (GlcNAc...) asparagine glycosylation. Residues C267 and C348 are joined by a disulfide bond. Y365 carries the post-translational modification Sulfotyrosine. 2 Plastocyanin-like domains span residues 399 to 573 (KTWV…LLIC) and 583 to 730 (NQIM…VSSC). The region spanning 399–730 (KTWVHYIAAE…MTALLKVSSC (332 aa)) is the F5/8 type A 2 domain. A disulfide bond links C547 and C573. N-linked (GlcNAc...) asparagine glycosylation is present at N601. C649 and C730 are oxidised to a cystine. 3 positions are modified to sulfotyrosine: Y737, Y738, and Y742. The interval 760-1667 (SFSQNSRHPS…NPPVLKRHQR (908 aa)) is b. N-linked (GlcNAc...) asparagine glycans are attached at residues N776, N803, N847, and N919. Disordered regions lie at residues 906–928 (STIP…PPSM) and 941–961 (FGKK…SEEN). N-linked (GlcNAc...) asparagine glycosylation is found at N962, N982, N1020, N1024, N1074, N1085, N1204, N1274, N1278, N1301, N1319, N1431, and N1461. 2 positions are modified to sulfotyrosine: Y1683 and Y1699. Plastocyanin-like domains follow at residues 1713 to 1877 (KTRH…LLVC) and 1887 to 2040 (GRQV…SNKC). The F5/8 type A 3 domain maps to 1713-2040 (KTRHYFIAAV…TLFLVYSNKC (328 aa)). N-linked (GlcNAc...) asparagine glycosylation is present at N1829. Cystine bridges form between C1851-C1877, C1918-C1922, C2040-C2188, and C2193-C2345. F5/8 type C domains follow at residues 2040–2188 (CQTP…LMGC) and 2193–2345 (CSMP…VLGC). N-linked (GlcNAc...) asparagine glycosylation occurs at N2137.

The protein belongs to the multicopper oxidase family. In terms of assembly, interacts with VWF/vWF. vWF binding is essential for the stabilization of F8 in circulation. Sulfation on Tyr-1699 is essential for binding vWF. Post-translationally, proteolytically cleaved by cathepsin CTSG to produce a partially activated form.

It is found in the secreted. It localises to the extracellular space. Its function is as follows. Factor VIII, along with calcium and phospholipid, acts as a cofactor for F9/factor IXa when it converts F10/factor X to the activated form, factor Xa. In Homo sapiens (Human), this protein is Coagulation factor VIII (F8).